The sequence spans 1040 residues: Multidrug resistance protein MdtB (1040 aa).

12 consecutive transmembrane segments (helical) span residues 25 to 45 (LLMA…PVAA), 347 to 367 (LMLA…NIPA), 369 to 389 (IIPG…MVFL), 396 to 416 (LTLM…IVVI), 440 to 460 (IGFT…PLLF), 472 to 492 (FAVT…TLTP), 537 to 557 (WLTL…WIVI), 863 to 883 (LGST…VLGV), 888 to 908 (FIHP…ALLA), 910 to 930 (IIAG…LIGI), 968 to 988 (ILMT…STGV), and 998 to 1018 (IAMV…TPVI).

It belongs to the resistance-nodulation-cell division (RND) (TC 2.A.6) family. MdtB subfamily. As to quaternary structure, part of a tripartite efflux system composed of MdtA, MdtB and MdtC. MdtB forms a heteromultimer with MdtC.

It localises to the cell inner membrane. The chain is Multidrug resistance protein MdtB from Salmonella dublin (strain CT_02021853).